The primary structure comprises 300 residues: tRNA dimethylallyltransferase 1 (300 aa).

13-20 (GPTGVGKT) serves as a coordination point for ATP. A substrate-binding site is contributed by 15-20 (TGVGKT). The interaction with substrate tRNA stretch occupies residues 38–41 (DSRQ).

It belongs to the IPP transferase family. In terms of assembly, monomer. Mg(2+) is required as a cofactor.

The catalysed reaction is adenosine(37) in tRNA + dimethylallyl diphosphate = N(6)-dimethylallyladenosine(37) in tRNA + diphosphate. Its function is as follows. Catalyzes the transfer of a dimethylallyl group onto the adenine at position 37 in tRNAs that read codons beginning with uridine, leading to the formation of N6-(dimethylallyl)adenosine (i(6)A). The protein is tRNA dimethylallyltransferase 1 of Porphyromonas gingivalis (strain ATCC BAA-308 / W83).